We begin with the raw amino-acid sequence, 516 residues long: L-amino acid oxidase Lm29 (516 aa).

The first 18 residues, 1–18 (MNVFFMFSLLFLAALGSC), serve as a signal peptide directing secretion. Cysteines 28 and 191 form a disulfide. FAD-binding positions include 61-62 (MS), 81-82 (EA), R89, and 105-108 (GPMR). Residue R108 coordinates substrate. N-linked (GlcNAc...) asparagine glycosylation is present at N190. H241 serves as a coordination point for substrate. V279 is an FAD binding site. C349 and C430 form a disulfide bridge. The N-linked (GlcNAc...) asparagine glycan is linked to N379. Y390 is a substrate binding site. FAD contacts are provided by residues E475 and 482-487 (GWIDST). 482-483 (GW) is a binding site for substrate.

The protein belongs to the flavin monoamine oxidase family. FIG1 subfamily. In terms of assembly, homodimer; non-covalently linked. FAD serves as cofactor. In terms of tissue distribution, expressed by the venom gland.

It is found in the secreted. It catalyses the reaction an L-alpha-amino acid + O2 + H2O = a 2-oxocarboxylate + H2O2 + NH4(+). It carries out the reaction L-leucine + O2 + H2O = 4-methyl-2-oxopentanoate + H2O2 + NH4(+). The catalysed reaction is L-phenylalanine + O2 + H2O = 3-phenylpyruvate + H2O2 + NH4(+). The enzyme catalyses L-tryptophan + O2 + H2O = indole-3-pyruvate + H2O2 + NH4(+). It catalyses the reaction L-methionine + O2 + H2O = 4-methylsulfanyl-2-oxobutanoate + H2O2 + NH4(+). It carries out the reaction L-isoleucine + O2 + H2O = (S)-3-methyl-2-oxopentanoate + H2O2 + NH4(+). The catalysed reaction is L-tyrosine + O2 + H2O = 3-(4-hydroxyphenyl)pyruvate + H2O2 + NH4(+). In terms of biological role, catalyzes an oxidative deamination of predominantly hydrophobic and aromatic L-amino acids, thus producing hydrogen peroxide that may contribute to the diverse toxic effects of this enzyme. Is highly active on L-Met=L-Leu&gt;&gt;L-Phe&gt;L-Trp&gt;L-Tyr&gt;L-Ile, and weakly or not active on L-His, L-Arg, L-Val, L-Gln, L-Thr, L-Lys, and L-Ser. Exhibits a low myotoxicity (a mild myonecrosis is observed after injection in mice quadriceps muscle). In vitro, is cytotoxic to a lot of human cell lines, including AGS (IC(50)=22.7 ug/ml), MCF-7 (IC(50)=1.4 ug/ml), HL-60, HeLa and Jurkat cells, as well as to the parasite Leishmania brasiliensis (IC(50)=2.22 ug/ml). This cytotoxicity is dependent on the production of hydrogen peroxyde, since it is inhibited by catalase, a hydrogen peroxyde scavenger. The protein is L-amino acid oxidase Lm29 of Lachesis muta (South American bushmaster).